The sequence spans 132 residues: Large ribosomal subunit protein bL17 (132 aa).

It belongs to the bacterial ribosomal protein bL17 family. In terms of assembly, part of the 50S ribosomal subunit. Contacts protein L32.

The chain is Large ribosomal subunit protein bL17 from Leptothrix cholodnii (strain ATCC 51168 / LMG 8142 / SP-6) (Leptothrix discophora (strain SP-6)).